Here is a 329-residue protein sequence, read N- to C-terminus: Nicotianamine synthase 8 (329 aa).

Belongs to the nicotianamine synthase (NAS)-like family. In terms of assembly, homotrimer.

It catalyses the reaction 3 S-adenosyl-L-methionine = nicotianamine + 3 S-methyl-5'-thioadenosine + 3 H(+). Its function is as follows. Synthesizes nicotianamine, a polyamine that is the first intermediate in the synthesis of the phytosiderophores of the mugineic acid type found in gramineae which serve as a sensor for the physiological iron status within the plant, and/or might be involved in the transport of iron. The protein is Nicotianamine synthase 8 (NAS8) of Hordeum vulgare (Barley).